A 468-amino-acid chain; its full sequence is Protein wingless (468 aa).

An N-terminal signal peptide occupies residues 1 to 17 (MDISYIFVICLMALCSG). The binds porcupine stretch occupies residues 83–106 (VKGANLAISECQHQFRNRRWNCST). Cys-93 and Cys-104 are oxidised to a cystine. 2 N-linked (GlcNAc...) asparagine glycosylation sites follow: Asn-103 and Asn-108. Disulfide bonds link Cys-146–Cys-154, Cys-156–Cys-185, Cys-233–Cys-247, and Cys-235–Cys-242. Residue Ser-239 is the site of O-palmitoleoyl serine; by PORCN attachment. The segment at 333 to 362 (ISKIHHPNMPSPNSLPQAGQRGGRNGRRQG) is disordered. 6 disulfides stabilise this stretch: Cys-397–Cys-428, Cys-413–Cys-423, Cys-427–Cys-467, Cys-443–Cys-458, Cys-445–Cys-455, and Cys-450–Cys-451. Residue Asn-414 is glycosylated (N-linked (GlcNAc...) asparagine).

It belongs to the Wnt family. Monomer; folds by intramolecular disulfide bonds. Interacts with porcupine (por). Interacts with wls; in the Golgi. Interacts with en. Interacts with the proteoglycan Cow (heparan sulfate-bound form); this stabilizes wg and promotes its extracellular distribution. Interacts with peg; the interaction facilitates short-range diffusion of wg. Post-translationally, palmitoleoylated by porcupine. The lipid group functions as a sorting signal, targeting the ligand to polarized vesicles that transport wg to unique sites at the cell surface. Depalmitoleoylated by notum, leading to inhibit Wnt signaling pathway. Major form is glycosylated at 2 sites, glycosylation is stimulated by porcupine at the ER. Segmented expression in embryos. In embryonic tracheal cells, expression is in stripes flanking the tracheal placode.

The protein localises to the secreted. It localises to the synapse. Its subcellular location is the membrane. The protein resides in the extracellular space. It is found in the extracellular matrix. Binds as a ligand to a family of frizzled seven-transmembrane receptors and acts through a cascade of genes on the nucleus. Segment polarity protein. May be a growth factor. Acts on neighboring cells to regulate at least one gene, the homeobox segmentation gene engrailed. Wg signal represses arm phosphorylation. Wg signaling operates by inactivating the sgg repression of engrailed autoactivation. Wg and Wnt2 have a role in the developing trachea and together are responsible for all dorsal trunk formation. Wg also acts in the developing epidermis. Acts as a morphogen, and diffuses long distances despite its lipidation. Lipophorin is required for diffusion, probably by acting as vehicle for its movement, explaining how it can spread over long distances despite its lipidation. In non-neuronal cells, wls directs wg secretion via clathrin-mediated endocytosis and the retromer complex (a conserved protein complex consisting of Vps26 and Vps35) to sustain a wls traffic loop encompassing the Golgi, the cell surface, an endocytic compartment and a retrograde route leading back to the Golgi. In neuronal cells (the larval motorneuron NMJ), wg signal moves across the synapse through the release of wls-containing exosome-like vesicles. The polypeptide is Protein wingless (wg) (Drosophila melanogaster (Fruit fly)).